The sequence spans 365 residues: Putative agmatine deiminase (365 aa).

Agmatine-binding residues include E214 and D220. C357 (amidino-cysteine intermediate) is an active-site residue.

It belongs to the agmatine deiminase family. In terms of assembly, tetramer of two homodimers.

The catalysed reaction is agmatine + H2O = N-carbamoylputrescine + NH4(+). The sequence is that of Putative agmatine deiminase from Enterococcus faecalis (strain ATCC 700802 / V583).